We begin with the raw amino-acid sequence, 292 residues long: Cbb3-type cytochrome c oxidase subunit CcoP (292 aa).

2 consecutive transmembrane segments (helical) span residues 11-31 (FGLI…SSLI) and 62-82 (VGWI…FFFG). Cytochrome c domains lie at 116–195 (ELVD…MAEI) and 205–288 (QLID…QSLK). Positions 129, 132, 133, 174, 219, 222, 223, and 264 each coordinate heme c.

This sequence belongs to the CcoP / FixP family. In terms of assembly, component of the cbb3-type cytochrome c oxidase at least composed of CcoN, CcoO, CcoQ and CcoP. Requires heme c as cofactor.

Its subcellular location is the cell inner membrane. Its pathway is energy metabolism; oxidative phosphorylation. C-type cytochrome. Part of the cbb3-type cytochrome c oxidase complex. CcoP subunit is required for transferring electrons from donor cytochrome c via its heme groups to CcoO subunit. From there, electrons are shuttled to the catalytic binuclear center of CcoN subunit where oxygen reduction takes place. The complex also functions as a proton pump. This is Cbb3-type cytochrome c oxidase subunit CcoP from Helicobacter pylori (Campylobacter pylori).